The sequence spans 200 residues: 3-isopropylmalate dehydratase small subunit (200 aa).

It belongs to the LeuD family. LeuD type 1 subfamily. As to quaternary structure, heterodimer of LeuC and LeuD.

The enzyme catalyses (2R,3S)-3-isopropylmalate = (2S)-2-isopropylmalate. It participates in amino-acid biosynthesis; L-leucine biosynthesis; L-leucine from 3-methyl-2-oxobutanoate: step 2/4. Its function is as follows. Catalyzes the isomerization between 2-isopropylmalate and 3-isopropylmalate, via the formation of 2-isopropylmaleate. This is 3-isopropylmalate dehydratase small subunit from Aliivibrio fischeri (strain MJ11) (Vibrio fischeri).